A 566-amino-acid chain; its full sequence is 3'-5' exoribonuclease parn-1 (566 aa).

4 residues coordinate a divalent metal cation: Asp-29, Glu-31, Asp-283, and Asp-379.

The protein belongs to the CAF1 family. A divalent metal cation serves as cofactor. Expressed in germline cells.

It is found in the cytoplasm. In terms of biological role, involved in transcriptome surveillance. Required for piwi-interacting RNAs (piRNAs) 3'-end trimming, which is important for both fertility and piRNA-directed gene silencing. Has 3' to 5' exonuclease activity in vitro. The chain is 3'-5' exoribonuclease parn-1 from Caenorhabditis elegans.